Here is a 2515-residue protein sequence, read N- to C-terminus: Polyprotein P1234 (2515 aa).

Positions 30–260 constitute an Alphavirus-like MT domain; it reads VAQQATPNDH…EHRASLQSWH (231 aa). The tract at residues 245-264 is nsP1 membrane-binding; sequence GSTLYPEHRASLQSWHLPSV. C420 is lipidated: S-palmitoyl cysteine; by host. Positions 695 to 850 constitute a (+)RNA virus helicase ATP-binding domain; the sequence is ELTNPPYHEL…RDICTKTFYK (156 aa). A ribonucleoside 5'-triphosphate is bound at residue 726-733; that stretch reads GTPGSGKS. A (+)RNA virus helicase C-terminal domain is found at 851–999; sequence FISRRCTQPV…IEDWEAEHKG (149 aa). The 330-residue stretch at 1012-1341 folds into the Peptidase C9 domain; it reads NPFSCKTNVC…CVISSVYEGT (330 aa). The segment at 1013–1032 is nucleolus localization signal; it reads PFSCKTNVCWAKALEPILAT. C1021 (for cysteine protease nsP2 activity) is an active-site residue. A Nuclear export signal motif is present at residues 1066–1075; it reads IKFFGMDLTS. H1098 acts as the For cysteine protease nsP2 activity in catalysis. The Nuclear localization signal motif lies at 1196–1200; that stretch reads PHKRI. Residues 1348 to 1507 form the Macro domain; the sequence is APSYRTKREN…RIDAVLQLKE (160 aa). ADP-D-ribose-binding residues include N1371, G1379, G1459, I1460, and Y1461. The Zn(2+) site is built by C1610, C1612, C1635, and C1653. Disordered regions lie at residues 1678 to 1705 and 1777 to 1797; these read QPAAPPAQDEEAPEAVATPAPPAADNTS and LAAASKTQEEPIPPASTSSAD. 2 short sequence motifs (FGDF; binding to host G3BP1) span residues 1839-1842 and 1862-1865; these read FGSF. One can recognise a RdRp catalytic domain in the interval 2269 to 2384; that stretch reads DPVLETDIAS…HGVVSDKEMA (116 aa).

In terms of assembly, interacts with non-structural protein 3. Interacts with RNA-directed RNA polymerase nsP4. Interacts with protease nsP2. interacts with itself. Interacts with mRNA-capping enzyme nsP1. Interacts with host DDX1. Interacts with host DDX3. Interacts (via C-terminus) with host G3BP1; this interaction inhibits the formation of host stress granules on viral mRNAs and the nsp3-G3BP1 complexes bind viral RNAs and probably orchestrate the assembly of viral replication complexes. Interacts (via C-terminus) with host G3BP2; this interaction inhibits the formation of host stress granules on viral mRNAs and the nsp3-G3BP2 complexes bind viral RNAs and probably orchestrate the assembly of viral replication complexes. As to quaternary structure, interacts with mRNA-capping enzyme nsP1. Interacts with protease nsP2. interacts with itself. In terms of assembly, interacts with RNA-directed RNA polymerase nsP4. Interacts with mRNA-capping enzyme nsP1. Interacts with KPNA1/karyopherin-alpha1; this interaction probably allows the active transport of protease nsP2 into the host nucleus. Mg(2+) serves as cofactor. Requires Mn(2+) as cofactor. In terms of processing, specific enzymatic cleavages in vivo yield mature proteins. The processing of the polyprotein is temporally regulated. In early stages (1.7 hpi), P1234 is first cleaved in trans through its nsP2 protease activity, releasing P123' and nsP4, which associate to form the early replication complex. At the same time, P1234 is also cut at the nsP1/nsP2 site early in infection but with lower efficiency. After replication of the viral minus-strand RNAs (4 hpi), the polyproteins are cut at the nsP1/nsP2 and nsP2/nsP3 sites very efficiently, preventing accumulation of P123' and P1234 and allowing the formation of the late replication complex. NsP3'/nsP4 site is not cleaved anymore and P34 is produced rather than nsP4. Post-translationally, specific enzymatic cleavages in vivo yield mature proteins. The processing of the polyprotein is temporally regulated. In early stages (1.7 hpi), P123 is cleaved at the nsP1/nsP2 site with low efficiency. After replication of the viral minus-strand RNAs (4 hpi), the polyproteins are cut at the nsP1/nsP2 and nsP2/nsP3 sites very efficiently, preventing accumulation of P123 and allowing the formation of the late replication complex. Specific enzymatic cleavages in vivo yield mature proteins. The processing of the polyprotein is temporally regulated. In early stages (1.7 hpi), P123' is cleaved at the nsP1/nsP2 site with low efficiency. After replication of the viral minus-strand RNAs (4 hpi), the polyproteins are cut at the nsP1/nsP2 and nsP2/nsP3 sites very efficiently, preventing accumulation of P123' and allowing the formation of the late replication complex. In terms of processing, palmitoylated by host palmitoyltransferases ZDHHC2 and ZDHHC19. Post-translationally, phosphorylated by host on serines and threonines. Ubiquitinated; targets the protein for rapid degradation via the ubiquitin system. Nsp4 is present in extremely low quantities due to low frequency of translation through the amber stop-codon and the degradation by the ubiquitin pathway.

Its subcellular location is the host cytoplasmic vesicle membrane. The protein localises to the host cell membrane. It is found in the host cell projection. It localises to the host filopodium. The protein resides in the host nucleus. Its subcellular location is the host cytoplasm. The catalysed reaction is GTP + S-adenosyl-L-methionine = N(7)-methyl-GTP + S-adenosyl-L-homocysteine. The enzyme catalyses N(7)-methyl-GTP + L-histidyl-[protein] = N(tele)-(N(7)-methylguanosine 5'-phospho)-L-histidyl-[protein] + diphosphate. It catalyses the reaction N(tele)-(N(7)-methylguanosine 5'-phospho)-L-histidyl-[protein] + a 5'-end diphospho-(purine-ribonucleoside) in mRNA + H(+) = a 5'-end (N(7)-methyl 5'-triphosphoguanosine)-(purine-ribonucleoside) in mRNA + L-histidyl-[protein]. It carries out the reaction a 5'-end triphospho-ribonucleoside in mRNA + H2O = a 5'-end diphospho-ribonucleoside in mRNA + phosphate + H(+). The catalysed reaction is a ribonucleoside 5'-triphosphate + H2O = a ribonucleoside 5'-diphosphate + phosphate + H(+). The enzyme catalyses ATP + H2O = ADP + phosphate + H(+). It catalyses the reaction RNA(n) + a ribonucleoside 5'-triphosphate = RNA(n+1) + diphosphate. It carries out the reaction RNA(n) + ATP = RNA(n)-3'-adenine ribonucleotide + diphosphate. The catalysed reaction is 4-O-(ADP-D-ribosyl)-L-aspartyl-[protein] + H2O = L-aspartyl-[protein] + ADP-D-ribose + H(+). The enzyme catalyses 5-O-(ADP-D-ribosyl)-L-glutamyl-[protein] + H2O = L-glutamyl-[protein] + ADP-D-ribose + H(+). It catalyses the reaction ADP-alpha-D-ribose 1''-phosphate + H2O = ADP-D-ribose + phosphate. Its function is as follows. Inactive precursor of the viral replicase, which is activated by cleavages carried out by the viral protease nsP2. Functionally, the early replication complex formed by the polyprotein P123 and nsP4 synthesizes minus-strand RNAs. As soon P123 is cleaved into mature proteins, the plus-strand RNAs synthesis begins. In terms of biological role, the early replication complex formed by the polyprotein P123' and nsP4 synthesizes minus-strand RNAs. Polyprotein P123' is a short-lived polyprotein that accumulates during early stage of infection. As soon P123' is cleaved into mature proteins, the plus-strand RNAs synthesis begins. Cytoplasmic capping enzyme that catalyzes two virus-specific reactions: methyltransferase and nsP1 guanylyltransferase. mRNA-capping is necessary since all viral RNAs are synthesized in the cytoplasm, and host capping enzymes are restricted to the nucleus. The enzymatic reaction involves a covalent link between 7-methyl-GMP and nsP1, whereas eukaryotic capping enzymes form a covalent complex only with GMP. nsP1 capping consists in the following reactions: GTP is first methylated into 7-methyl-GMP and then is covalently linked to nsP1 to form the m7GMp-nsP1 complex from which 7-methyl-GMP complex is transferred to the mRNA to create the cap structure. NsP1 is needed for the initiation of the minus-strand RNAs synthesis. Probably serves as a membrane anchor for the replication complex composed of nsP1-nsP4. Palmitoylated nsP1 is remodeling host cell cytoskeleton, and induces filopodium-like structure formation at the surface of the host cell. Interacts with host TMEM45B; this interaction leads to viral replication inhibition. Its function is as follows. Multifunctional protein whose N-terminus is part of the RNA polymerase complex and displays NTPase, RNA triphosphatase and helicase activities. NTPase and RNA triphosphatase are involved in viral RNA capping and helicase keeps a check on the dsRNA replication intermediates. The C-terminus harbors a protease that specifically cleaves the polyproteins and releases the mature proteins. Required for the shutoff of minus-strand RNAs synthesis. Specifically inhibits the host IFN response by promoting the nuclear export of host STAT1. Also inhibits host transcription by inducing rapid proteasome-dependent degradation of POLR2A, a catalytic subunit of the RNAPII complex. The resulting inhibition of cellular protein synthesis serves to ensure maximal viral gene expression and to evade host immune response. Functionally, seems to be essential for minus-strand RNAs and subgenomic 26S mRNAs synthesis. Displays mono-ADP-ribosylhydrolase activity. ADP-ribosylation is a post-translational modification that controls various processes of the host cell and the virus probably needs to revert it for optimal viral replication. Binds proteins of FXR family and sequesters them into the viral RNA replication complexes thereby inhibiting the formation of host stress granules on viral mRNAs. The nsp3'-FXR complexes bind viral RNAs and probably orchestrate the assembly of viral replication complexes, thanks to the ability of FXR family members to self-assemble and bind DNA. In terms of biological role, seems to be essential for minus-strand RNAs and subgenomic 26S mRNAs synthesis. Displays mono-ADP-ribosylhydrolase activity. ADP-ribosylation is a post-translantional modification that controls various processes of the host cell and the virus probably needs to revert it for optimal viral replication. Binds proteins of G3BP family and sequesters them into the viral RNA replication complexes thereby inhibiting the formation of host stress granules on viral mRNAs. The nsp3-G3BP complexes bind viral RNAs and probably orchestrate the assembly of viral replication complexes, thanks to the ability of G3BP family members to self-assemble and bind DNA. RNA dependent RNA polymerase. Replicates genomic and antigenomic RNA by recognizing replications specific signals. The early replication complex formed by the polyprotein P123 and nsP4 synthesizes minus-strand RNAs. The late replication complex composed of fully processed nsP1-nsP4 is responsible for the production of genomic and subgenomic plus-strand RNAs. The core catalytic domain of nsP4 also possesses terminal adenylyltransferase (TATase) activity that is probably involved in maintenance and repair of the poly(A) tail, an element required for replication of the viral genome. Interacts with host TMEM45B; this interaction leads to viral replication inhibition. This chain is Polyprotein P1234, found in Acrocephalus scirpaceus (Eurasian reed-warbler).